A 240-amino-acid polypeptide reads, in one-letter code: DNA repair protein RecO (240 aa).

The protein belongs to the RecO family.

In terms of biological role, involved in DNA repair and RecF pathway recombination. The protein is DNA repair protein RecO of Actinobacillus pleuropneumoniae serotype 7 (strain AP76).